A 400-amino-acid polypeptide reads, in one-letter code: Deoxyguanosinetriphosphate triphosphohydrolase-like protein (400 aa).

An HD domain is found at 73–215; the sequence is RLTHSIEVSQ…AAIADDIAYN (143 aa).

This sequence belongs to the dGTPase family. Type 2 subfamily.

This Bartonella tribocorum (strain CIP 105476 / IBS 506) protein is Deoxyguanosinetriphosphate triphosphohydrolase-like protein.